Consider the following 150-residue polypeptide: Arginine repressor (150 aa).

This sequence belongs to the ArgR family.

It localises to the cytoplasm. Its pathway is amino-acid biosynthesis; L-arginine biosynthesis [regulation]. Functionally, regulates arginine biosynthesis genes. The chain is Arginine repressor from Clostridium botulinum (strain Loch Maree / Type A3).